The sequence spans 37 residues: Large ribosomal subunit protein bL36 (37 aa).

This sequence belongs to the bacterial ribosomal protein bL36 family.

This is Large ribosomal subunit protein bL36 from Brevibacillus brevis (strain 47 / JCM 6285 / NBRC 100599).